A 507-amino-acid chain; its full sequence is Probable allantoinase (507 aa).

6 residues coordinate Zn(2+): histidine 105, histidine 107, lysine 195, histidine 231, histidine 294, and aspartate 368. Lysine 195 carries the post-translational modification N6-carboxylysine.

It belongs to the metallo-dependent hydrolases superfamily. Allantoinase family. Homotetramer. Zn(2+) serves as cofactor. In terms of processing, carboxylation allows a single lysine to coordinate two zinc ions.

The enzyme catalyses (S)-allantoin + H2O = allantoate + H(+). It participates in nitrogen metabolism; (S)-allantoin degradation; allantoate from (S)-allantoin: step 1/1. Its function is as follows. Catalyzes the conversion of allantoin (5-ureidohydantoin) to allantoate by hydrolytic cleavage of the five-member hydantoin ring. Catalyzes the first step of the ureide allantoin degradation followed by the sequential activity of AAH, UGLYAH and UAH which allows a complete purine breakdown without the intermediate generation of urea. In Oryza sativa subsp. japonica (Rice), this protein is Probable allantoinase (ALN).